The chain runs to 158 residues: 6,7-dimethyl-8-ribityllumazine synthase (158 aa).

Residues Phe-22, 56-58, and 80-82 each bind 5-amino-6-(D-ribitylamino)uracil; these read ALE and VVI. 85-86 serves as a coordination point for (2S)-2-hydroxy-3-oxobutyl phosphate; sequence ET. Catalysis depends on His-88, which acts as the Proton donor. Asn-113 provides a ligand contact to 5-amino-6-(D-ribitylamino)uracil. Arg-127 contacts (2S)-2-hydroxy-3-oxobutyl phosphate.

It belongs to the DMRL synthase family.

It catalyses the reaction (2S)-2-hydroxy-3-oxobutyl phosphate + 5-amino-6-(D-ribitylamino)uracil = 6,7-dimethyl-8-(1-D-ribityl)lumazine + phosphate + 2 H2O + H(+). The protein operates within cofactor biosynthesis; riboflavin biosynthesis; riboflavin from 2-hydroxy-3-oxobutyl phosphate and 5-amino-6-(D-ribitylamino)uracil: step 1/2. Its function is as follows. Catalyzes the formation of 6,7-dimethyl-8-ribityllumazine by condensation of 5-amino-6-(D-ribitylamino)uracil with 3,4-dihydroxy-2-butanone 4-phosphate. This is the penultimate step in the biosynthesis of riboflavin. The sequence is that of 6,7-dimethyl-8-ribityllumazine synthase from Neisseria meningitidis serogroup C / serotype 2a (strain ATCC 700532 / DSM 15464 / FAM18).